Reading from the N-terminus, the 100-residue chain is Large ribosomal subunit protein uL23 (100 aa).

This sequence belongs to the universal ribosomal protein uL23 family. As to quaternary structure, part of the 50S ribosomal subunit. Contacts protein L29, and trigger factor when it is bound to the ribosome.

Its function is as follows. One of the early assembly proteins it binds 23S rRNA. One of the proteins that surrounds the polypeptide exit tunnel on the outside of the ribosome. Forms the main docking site for trigger factor binding to the ribosome. The protein is Large ribosomal subunit protein uL23 of Mycolicibacterium smegmatis (strain ATCC 700084 / mc(2)155) (Mycobacterium smegmatis).